Consider the following 369-residue polypeptide: MTNNSQIKVIVGMSGGVDSSVSAYLLQQQGYQVEGLFMKNWEEDDSDEYCSAATDLADAQAVCDKLGIKLHTVNFAAEYWDNVFELFLAEYKAGRTPNPDILCNKEIKFKAFLEFAAEDLGADYIATGHYVRRDDSTGHPRLLRGLDNNKDQSYFLYTLSSEQIAQSLFPVGDLEKPQVRAIAEQLGLATAKKKDSTGICFIGERKFTEFLGRYLPAQPGVIETVDGKVIGEHQGLMYHTLGQRKGLGIGGLKDGDENPWYVVDKDVARNVLIVAQGHDHPRLFSDGLIAKQLDWVDRQVRREPFDCVVKTRYRQQDIPCHVEPLDDDTIKVTFASPQAAVTPGQSAVFYLGEECLGGGIIEQRFSGSV.

ATP-binding positions include 12–19 (GMSGGVDS) and methionine 38. Residues 98–100 (NPD) form an interaction with target base in tRNA region. The active-site Nucleophile is cysteine 103. A disulfide bridge links cysteine 103 with cysteine 200. Glycine 128 provides a ligand contact to ATP. The interval 150–152 (KDQ) is interaction with tRNA. Residue cysteine 200 is the Cysteine persulfide intermediate of the active site. The interval 312–313 (RY) is interaction with tRNA.

It belongs to the MnmA/TRMU family.

Its subcellular location is the cytoplasm. It catalyses the reaction S-sulfanyl-L-cysteinyl-[protein] + uridine(34) in tRNA + AH2 + ATP = 2-thiouridine(34) in tRNA + L-cysteinyl-[protein] + A + AMP + diphosphate + H(+). Its function is as follows. Catalyzes the 2-thiolation of uridine at the wobble position (U34) of tRNA, leading to the formation of s(2)U34. In Tolumonas auensis (strain DSM 9187 / NBRC 110442 / TA 4), this protein is tRNA-specific 2-thiouridylase MnmA.